A 407-amino-acid chain; its full sequence is Tyrosine--tRNA ligase (407 aa).

Tyrosine 35 is an L-tyrosine binding site. The 'HIGH' region motif lies at 40-49 (PTADSLHVGH). Residues tyrosine 168 and glutamine 172 each contribute to the L-tyrosine site. The 'KMSKS' region motif lies at 228 to 232 (KMGKT). Lysine 231 provides a ligand contact to ATP. The S4 RNA-binding domain occupies 341-405 (NLLVDLLVKC…RGKKNFNRIV (65 aa)).

This sequence belongs to the class-I aminoacyl-tRNA synthetase family. TyrS type 1 subfamily. As to quaternary structure, homodimer.

It localises to the cytoplasm. It carries out the reaction tRNA(Tyr) + L-tyrosine + ATP = L-tyrosyl-tRNA(Tyr) + AMP + diphosphate + H(+). Its function is as follows. Catalyzes the attachment of tyrosine to tRNA(Tyr) in a two-step reaction: tyrosine is first activated by ATP to form Tyr-AMP and then transferred to the acceptor end of tRNA(Tyr). The polypeptide is Tyrosine--tRNA ligase (Clostridium botulinum (strain ATCC 19397 / Type A)).